The chain runs to 110 residues: SOSS complex subunit C (110 aa).

Belongs to the SOSS-C family. In terms of assembly, belongs to the multiprotein complex Integrator. Component of the SOSS complex, composed of soss-b (soss-b1/nabp2 or soss-b2/nabp1), soss-a/ints3 and soss-c/inip.

It localises to the nucleus. In terms of biological role, component of the SOSS complex, a multiprotein complex that functions downstream of the MRN complex to promote DNA repair and G2/M checkpoint. The SOSS complex associates with single-stranded DNA at DNA lesions and influences diverse endpoints in the cellular DNA damage response including cell-cycle checkpoint activation, recombinational repair and maintenance of genomic stability. Required for efficient homologous recombination-dependent repair of double-strand breaks (DSBs). This Xenopus laevis (African clawed frog) protein is SOSS complex subunit C (inip).